Reading from the N-terminus, the 387-residue chain is Small ribosomal subunit protein mS31 (387 aa).

The N-terminal 56 residues, 1–56 (MLHRIPAFIRPRPFSGLPLSCGNREVSVAASVLPAAGSGAVRTENTIQRHFCTSRS), are a transit peptide targeting the mitochondrion. Disordered stretches follow at residues 59-83 (SKKD…GEGK) and 203-228 (KSPS…SSLS). Polar residues-rich tracts occupy residues 66 to 76 (VPANETSQKAA) and 207 to 217 (MRVSSRPQHQI).

This sequence belongs to the mitochondrion-specific ribosomal protein mS31 family. Component of the mitochondrial ribosome small subunit (28S) which comprises a 12S rRNA and about 30 distinct proteins.

It is found in the mitochondrion. The polypeptide is Small ribosomal subunit protein mS31 (Mrps31) (Rattus norvegicus (Rat)).